A 280-amino-acid polypeptide reads, in one-letter code: Succinate dehydrogenase [ubiquinone] iron-sulfur subunit, mitochondrial (280 aa).

Residues 1–28 (MAAVVALSLRRRFPAAALGGARLQACRG) constitute a mitochondrion transit peptide. Positions 40-133 (KKFAIYRWDP…VSKIYPLPHM (94 aa)) constitute a 2Fe-2S ferredoxin-type domain. N6-acetyllysine is present on residues lysine 51 and lysine 55. Residues cysteine 93, cysteine 98, cysteine 101, and cysteine 113 each coordinate [2Fe-2S] cluster. Positions 146–218 (FYAQYKSIEP…PAVLMQAYRW (73 aa)) are interaction with SDHAF1. The 4Fe-4S ferredoxin-type domain occupies 176 to 206 (DREKLDGLYECILCACCSTSCPSYWWNGDKY). Positions 186, 189, and 192 each coordinate [4Fe-4S] cluster. Residue cysteine 196 coordinates [3Fe-4S] cluster. Position 201 (tryptophan 201) interacts with a ubiquinone. Cysteine 243 and cysteine 249 together coordinate [3Fe-4S] cluster. A [4Fe-4S] cluster-binding site is contributed by cysteine 253.

Belongs to the succinate dehydrogenase/fumarate reductase iron-sulfur protein family. In terms of assembly, component of complex II composed of four subunits: the flavoprotein (FP) SDHA, iron-sulfur protein (IP) SDHB, and a cytochrome b560 composed of SDHC and SDHD. Interacts with SDHAF1; the interaction is required for iron-sulfur cluster incorporation into SDHB. [2Fe-2S] cluster serves as cofactor. The cofactor is [3Fe-4S] cluster. [4Fe-4S] cluster is required as a cofactor.

Its subcellular location is the mitochondrion inner membrane. The enzyme catalyses a quinone + succinate = fumarate + a quinol. The catalysed reaction is (R)-malate + a quinone = enol-oxaloacetate + a quinol. It catalyses the reaction (S)-malate + a quinone = enol-oxaloacetate + a quinol. It participates in carbohydrate metabolism; tricarboxylic acid cycle; fumarate from succinate (eukaryal route): step 1/1. With respect to regulation, enol-oxaloacetate inhibits the succinate dehydrogenase activity. In terms of biological role, iron-sulfur protein (IP) subunit of the succinate dehydrogenase complex (mitochondrial respiratory chain complex II), responsible for transferring electrons from succinate to ubiquinone (coenzyme Q). SDH also oxidizes malate to the non-canonical enol form of oxaloacetate, enol-oxaloacetate. Enol-oxaloacetate, which is a potent inhibitor of the succinate dehydrogenase activity, is further isomerized into keto-oxaloacetate. This chain is Succinate dehydrogenase [ubiquinone] iron-sulfur subunit, mitochondrial (SDHB), found in Bos taurus (Bovine).